A 284-amino-acid chain; its full sequence is MMSLDVIFILKSVIIAIVEGLTEFIPVSSTGHMILVGNLIDFKGQFAEMFEVVIQLGAILAVVVLYWKKIKDSVIEFFKFIFTGGKEGKIGFRFGMNVIIGCIPFAIIGVLFYDNIKSLFNLQSVIIGFIVGGILLLVVETLFRKKNHSTDNIDKITPIQALKVGTLQVLSAWPGMSRSASTIMGGWIAGLNSPTAAEFSFFLAVPAMVASSGKDLFEFDYSIMTPTLWIALVVGFIVAFIVSIIVMEKFVNFLKKKPMRVFAVYRIIMGVVLAVLAFTNIISV.

7 helical membrane-spanning segments follow: residues 6-26 (VIFILKSVIIAIVEGLTEFIP), 46-66 (FAEMFEVVIQLGAILAVVVLY), 94-114 (FGMNVIIGCIPFAIIGVLFYD), 119-139 (LFNLQSVIIGFIVGGILLLVV), 183-203 (IMGGWIAGLNSPTAAEFSFFL), 227-247 (TLWIALVVGFIVAFIVSIIVM), and 262-282 (FAVYRIIMGVVLAVLAFTNII).

This sequence belongs to the UppP family.

Its subcellular location is the cell membrane. The enzyme catalyses di-trans,octa-cis-undecaprenyl diphosphate + H2O = di-trans,octa-cis-undecaprenyl phosphate + phosphate + H(+). Functionally, catalyzes the dephosphorylation of undecaprenyl diphosphate (UPP). Confers resistance to bacitracin. The polypeptide is Undecaprenyl-diphosphatase 2 (Clostridioides difficile (strain 630) (Peptoclostridium difficile)).